Consider the following 492-residue polypeptide: Glutamyl-tRNA(Gln) amidotransferase subunit A (492 aa).

Active-site charge relay system residues include K80 and S155. S179 (acyl-ester intermediate) is an active-site residue.

Belongs to the amidase family. GatA subfamily. In terms of assembly, heterotrimer of A, B and C subunits.

It carries out the reaction L-glutamyl-tRNA(Gln) + L-glutamine + ATP + H2O = L-glutaminyl-tRNA(Gln) + L-glutamate + ADP + phosphate + H(+). Allows the formation of correctly charged Gln-tRNA(Gln) through the transamidation of misacylated Glu-tRNA(Gln) in organisms which lack glutaminyl-tRNA synthetase. The reaction takes place in the presence of glutamine and ATP through an activated gamma-phospho-Glu-tRNA(Gln). The chain is Glutamyl-tRNA(Gln) amidotransferase subunit A from Mycobacteroides abscessus (strain ATCC 19977 / DSM 44196 / CCUG 20993 / CIP 104536 / JCM 13569 / NCTC 13031 / TMC 1543 / L948) (Mycobacterium abscessus).